A 249-amino-acid chain; its full sequence is Serine 3-dehydrogenase (249 aa).

NADP(+) is bound at residue 6 to 30 (LITGATSGFGQATARRFVKEGWKVI). Residue Ser-135 participates in substrate binding. Residue Tyr-148 is the Proton acceptor of the active site.

It belongs to the short-chain dehydrogenases/reductases (SDR) family. In terms of assembly, homotetramer.

The catalysed reaction is L-serine + NADP(+) = aminoacetaldehyde + CO2 + NADPH. Catalyzes the oxidation of the hydroxyl group of serine to form 2-aminomalonate semialdehyde which is spontaneously converted into 2-aminoacetaldehyde and CO(2). Also acts on D-serine, L-glycerate, D-glycerate and 2-methyl-DL-serine. Does not act on O-methyl-DL-serine and L-threonine. This Agrobacterium fabrum (strain C58 / ATCC 33970) (Agrobacterium tumefaciens (strain C58)) protein is Serine 3-dehydrogenase (sdh).